The following is a 273-amino-acid chain: 3-methyl-2-oxobutanoate hydroxymethyltransferase (273 aa).

Residues aspartate 49 and aspartate 88 each contribute to the Mg(2+) site. 3-methyl-2-oxobutanoate contacts are provided by residues 49–50 (DS), aspartate 88, and lysine 118. Glutamate 120 is a Mg(2+) binding site. Glutamate 187 serves as the catalytic Proton acceptor.

It belongs to the PanB family. Homodecamer; pentamer of dimers. Requires Mg(2+) as cofactor.

It localises to the cytoplasm. It catalyses the reaction 3-methyl-2-oxobutanoate + (6R)-5,10-methylene-5,6,7,8-tetrahydrofolate + H2O = 2-dehydropantoate + (6S)-5,6,7,8-tetrahydrofolate. The protein operates within cofactor biosynthesis; (R)-pantothenate biosynthesis; (R)-pantoate from 3-methyl-2-oxobutanoate: step 1/2. In terms of biological role, catalyzes the reversible reaction in which hydroxymethyl group from 5,10-methylenetetrahydrofolate is transferred onto alpha-ketoisovalerate to form ketopantoate. The chain is 3-methyl-2-oxobutanoate hydroxymethyltransferase from Rhizobium etli (strain ATCC 51251 / DSM 11541 / JCM 21823 / NBRC 15573 / CFN 42).